The sequence spans 71 residues: MIIPVRCFTCGKVIGNKWDAYLDLLQLDYTEGDALDALNLVRYCCRRMLMTHVDLIEKLLNYNTLEKSDNS.

Zn(2+) is bound by residues Cys-7, Cys-10, Cys-44, and Cys-45.

This sequence belongs to the archaeal Rpo10/eukaryotic RPB10 RNA polymerase subunit family. Component of the RNA polymerase I (Pol I), RNA polymerase II (Pol II) and RNA polymerase III (Pol III) complexes consisting of at least 13, 12 and 17 subunits, respectively.

It localises to the nucleus. Functionally, DNA-dependent RNA polymerase catalyzes the transcription of DNA into RNA using the four ribonucleoside triphosphates as substrates. Common component of RNA polymerases I, II and III which synthesize ribosomal RNA precursors, mRNA precursors and many functional non-coding RNAs, and a small RNAs, such as 5S rRNA and tRNAs, respectively. Pol II is the central component of the basal RNA polymerase II transcription machinery. Pols are composed of mobile elements that move relative to each other. In Pol II, RBP10 is part of the core element with the central large cleft. This is DNA-directed RNA polymerases I, II, and III subunit RPABC5 from Brassica napus (Rape).